The primary structure comprises 201 residues: Peroxiredoxin 2 (201 aa).

Residues 3 to 156 (VYLGKRAPDF…ILRSVKALQA (154 aa)) enclose the Thioredoxin domain. The Cysteine sulfenic acid (-SOH) intermediate role is filled by C44. R119 contacts substrate.

This sequence belongs to the peroxiredoxin family. Prx6 subfamily. Homodecamer. Pentamer of dimers that assemble into a ring structure.

It is found in the cytoplasm. The catalysed reaction is a hydroperoxide + [thioredoxin]-dithiol = an alcohol + [thioredoxin]-disulfide + H2O. In terms of biological role, thiol-specific peroxidase that catalyzes the reduction of hydrogen peroxide and organic hydroperoxides to water and alcohols, respectively. Plays a role in cell protection against oxidative stress by detoxifying peroxides. In Picrophilus torridus (strain ATCC 700027 / DSM 9790 / JCM 10055 / NBRC 100828 / KAW 2/3), this protein is Peroxiredoxin 2.